The sequence spans 285 residues: UPF0354 protein SH1179 (285 aa).

This sequence belongs to the UPF0354 family.

This is UPF0354 protein SH1179 from Staphylococcus haemolyticus (strain JCSC1435).